Reading from the N-terminus, the 220-residue chain is Gene 32 protein (220 aa).

The interval 184–205 (NSAGGNGNAPGGGGAGAQVSAQ) is disordered. A compositionally biased stretch (gly residues) spans 187-199 (GGNGNAPGGGGAG).

The polypeptide is Gene 32 protein (32) (Mycobacterium (Mycobacteriophage L5)).